A 459-amino-acid chain; its full sequence is UDP-N-acetylmuramoylalanine--D-glutamate ligase (459 aa).

ATP is bound at residue 120-126 (GSNGKTT).

Belongs to the MurCDEF family.

It is found in the cytoplasm. It catalyses the reaction UDP-N-acetyl-alpha-D-muramoyl-L-alanine + D-glutamate + ATP = UDP-N-acetyl-alpha-D-muramoyl-L-alanyl-D-glutamate + ADP + phosphate + H(+). Its pathway is cell wall biogenesis; peptidoglycan biosynthesis. In terms of biological role, cell wall formation. Catalyzes the addition of glutamate to the nucleotide precursor UDP-N-acetylmuramoyl-L-alanine (UMA). In Lactobacillus helveticus (strain DPC 4571), this protein is UDP-N-acetylmuramoylalanine--D-glutamate ligase.